The following is a 71-amino-acid chain: Small ribosomal subunit protein bS21 (71 aa).

A compositionally biased stretch (basic residues) spans 48–59 (KAAAAVKRHAKK). Positions 48 to 71 (KAAAAVKRHAKKVQRENRKFQRLY) are disordered. The segment covering 60–71 (VQRENRKFQRLY) has biased composition (basic and acidic residues).

Belongs to the bacterial ribosomal protein bS21 family.

This chain is Small ribosomal subunit protein bS21, found in Saccharophagus degradans (strain 2-40 / ATCC 43961 / DSM 17024).